The sequence spans 54 residues: Apelin receptor early endogenous ligand (54 aa).

The signal sequence occupies residues Met1–Gln23.

Belongs to the Elabela/Toddler family. As to quaternary structure, interacts with APLNR. As to expression, expressed in the placenta. Expressed in syncytiotrophoblasts of the placenta labyrinth at 10.5 dpc. Expressed in placental chorionic trophoblasts (at protein level). Expressed in a small population of epiblast cells in the distal half of the embryo at 7 dpc. Expressed in newly formed definitive endoderm cells in the proximal half of the embryo, while it is not present in extra-embryonic endoderm at 7.5 dpc. This expression pattern then changes to the ventral aspect of the developing foregut pocket and the entire hindgut pocket at 8.5 dpc, before becoming restricted to the foregut overlying the heart and the posterior-most hindgut. Not detected in endothelial precursor cells of the yolk sac at 8 dpc. Expressed in extraembryonic tissues as well as in the chorion at 8.25 dpc. Expressed in endometrial stroma of the uterus of pregnant mice at 8.5 dpc. Expressed in the developing heart, caudal neural tube and trophobasts at 9 dpc. Expressed in the chorionic plate of the chorioallantoic placenta at 9 dpc. Expressed in the posterior half of the ventral neural tube at 9.25 dpc. Expressed in trophoblast cells at the periphery of the placenta at 9.5 dpc. Expressed in collecting ducts of the kidney of pregnant mice at 10.5 dpc. Expressed in the epicardium of the developing heart at 11.5 dpc. Expressed weakly in the adult heart. Expressed in endothelial cells and fibroblasts and weakly in cardiomyocytes.

The protein resides in the secreted. It is found in the extracellular space. Its function is as follows. Peptide hormone that functions as endogenous ligand for the G-protein-coupled apelin receptor (APLNR/APJ), that plays a role in the regulation of normal cardiovascular function and fluid homeostasis. Functions as a balanced agonist activating both G(i) protein pathway and beta-arrestin pathway of APLNR. Downstream G proteins activation, apelin can inhibit cAMP production and activate key intracellular effectors such as ERKs. On the other hand, APLNR activation induces beta-arrestin recruitment to the membrane leading to desensitization and internalization of the receptor. Required for mesendodermal differentiation, blood vessels formation and heart morphogenesis during early development and for adult cardiovascular homeostasis. Acts as a motogen by promoting mesendodermal cell migration during gastrulation by binding and activating APLNR. Acts as an early embryonic regulator of cellular movement with a role in migration and development of cardiac progenitor cells. May act as a chemoattractant for the activation of angioblast migration toward the embryonic midline, i.e. the position of the future vessel formation, during vasculogenesis. Positively regulates sinus venosus (SV)-derived endothelial cells migration into the developing heart to promote coronary blood vessel sprouting. Plays a role in placental vascular development; promotes placental trophoblast invasion and spiral artery remodeling in the uterus. Involved in the regulation of maternal cardiovascular homeostasis to prevent gestational hypertension and for potent cardioprotective functions during heart failure. Mediates myocardial contractility in an ERK1/2-dependent manner. In Mus musculus (Mouse), this protein is Apelin receptor early endogenous ligand.